The sequence spans 185 residues: Sarcoplasmic calcium-binding proteins II, V, VI, and VII (185 aa).

EF-hand domains are found at residues 5–41 (FQKQ…YKEV), 57–92 (SLED…TIAT), 102–137 (WCQN…FQLQ), and 138–173 (CADV…TSPA). 13 residues coordinate Ca(2+): Asp-19, Asn-21, Asp-23, Ser-25, Asp-30, Asp-70, Asn-72, Asp-74, Glu-81, Asp-115, Ser-117, Asp-119, and Glu-126.

Functionally, like parvalbumins, SCPs seem to be more abundant in fast contracting muscles, but no functional relationship can be established from this distribution. This is Sarcoplasmic calcium-binding proteins II, V, VI, and VII from Branchiostoma lanceolatum (Common lancelet).